An 84-amino-acid polypeptide reads, in one-letter code: Small ribosomal subunit protein bS16c (84 aa).

The protein belongs to the bacterial ribosomal protein bS16 family.

The protein localises to the plastid. It localises to the chloroplast. The chain is Small ribosomal subunit protein bS16c from Anthoceros angustus (Hornwort).